The chain runs to 513 residues: ATP synthase subunit alpha 1 (513 aa).

Position 169–176 (169–176 (GDRQTGKT)) interacts with ATP.

The protein belongs to the ATPase alpha/beta chains family. As to quaternary structure, F-type ATPases have 2 components, CF(1) - the catalytic core - and CF(0) - the membrane proton channel. CF(1) has five subunits: alpha(3), beta(3), gamma(1), delta(1), epsilon(1). CF(0) has three main subunits: a(1), b(2) and c(9-12). The alpha and beta chains form an alternating ring which encloses part of the gamma chain. CF(1) is attached to CF(0) by a central stalk formed by the gamma and epsilon chains, while a peripheral stalk is formed by the delta and b chains.

The protein localises to the cell inner membrane. The enzyme catalyses ATP + H2O + 4 H(+)(in) = ADP + phosphate + 5 H(+)(out). Its function is as follows. Produces ATP from ADP in the presence of a proton gradient across the membrane. The alpha chain is a regulatory subunit. The chain is ATP synthase subunit alpha 1 from Vibrio campbellii (strain ATCC BAA-1116).